An 894-amino-acid chain; its full sequence is ABC-transporter-regulating transcription factor (894 aa).

The zn(2)-C6 fungal-type DNA-binding region spans 71–98 (CDMCRKKKIKCDGKMPKCSHCINYRTDC). Residues 159–174 (NTALNSLKSPTNKFNG) are compositionally biased toward polar residues. Residues 159–219 (NTALNSLKSP…PKESETEVEG (61 aa)) form a disordered region. The segment covering 175–189 (SSATSQSQHTTASRH) has biased composition (low complexity). Over residues 199-210 (SPHTAATSPNSP) the composition is skewed to polar residues. A helical transmembrane segment spans residues 649–669 (CVWLILYYPVSALVTLFANIL). A disordered region spans residues 724–797 (AEKESHSKKK…MSNPTRAFAP (74 aa)). Positions 736-750 (AAPDEPQDLRQKTPD) are enriched in basic and acidic residues. Polar residues-rich tracts occupy residues 751–761 (ENSVPSPSTKR) and 771–792 (LFPSSSYPINLGNTGPDMSNPT).

It localises to the nucleus. Its subcellular location is the membrane. Functionally, transcription factor that regulates expression of the genes related to resistance to azole compounds. This is ABC-transporter-regulating transcription factor from Aspergillus oryzae (strain ATCC 42149 / RIB 40) (Yellow koji mold).